Consider the following 415-residue polypeptide: Serine hydroxymethyltransferase (415 aa).

Residues Leu117 and 121–123 (GHL) contribute to the (6S)-5,6,7,8-tetrahydrofolate site. Position 225 is an N6-(pyridoxal phosphate)lysine (Lys225). Residue 349-351 (SPF) participates in (6S)-5,6,7,8-tetrahydrofolate binding.

Belongs to the SHMT family. In terms of assembly, homodimer. Pyridoxal 5'-phosphate serves as cofactor.

It localises to the cytoplasm. The enzyme catalyses (6R)-5,10-methylene-5,6,7,8-tetrahydrofolate + glycine + H2O = (6S)-5,6,7,8-tetrahydrofolate + L-serine. Its pathway is one-carbon metabolism; tetrahydrofolate interconversion. The protein operates within amino-acid biosynthesis; glycine biosynthesis; glycine from L-serine: step 1/1. In terms of biological role, catalyzes the reversible interconversion of serine and glycine with tetrahydrofolate (THF) serving as the one-carbon carrier. This reaction serves as the major source of one-carbon groups required for the biosynthesis of purines, thymidylate, methionine, and other important biomolecules. Also exhibits THF-independent aldolase activity toward beta-hydroxyamino acids, producing glycine and aldehydes, via a retro-aldol mechanism. This Nitratiruptor sp. (strain SB155-2) protein is Serine hydroxymethyltransferase.